The primary structure comprises 132 residues: Small ribosomal subunit protein uS8c (132 aa).

This sequence belongs to the universal ribosomal protein uS8 family. As to quaternary structure, part of the 30S ribosomal subunit.

Its subcellular location is the plastid. The protein localises to the chloroplast. Functionally, one of the primary rRNA binding proteins, it binds directly to 16S rRNA central domain where it helps coordinate assembly of the platform of the 30S subunit. The protein is Small ribosomal subunit protein uS8c (rps8) of Ceratophyllum demersum (Rigid hornwort).